The sequence spans 312 residues: Zinc transporter ZitB (312 aa).

5 helical membrane passes run 21-41, 48-68, 90-110, 123-143, and 164-184; these read LLFA…GGIL, LADA…LLAV, AAFV…WEAI, LMMV…WILH, and LLGS…GWTP.

Belongs to the cation diffusion facilitator (CDF) transporter (TC 2.A.4) family. SLC30A subfamily.

Its subcellular location is the cell inner membrane. In terms of biological role, involved in zinc efflux across the cytoplasmic membrane, thus reducing zinc accumulation in the cytoplasm and rendering bacteria more resistant to zinc. It may contribute to zinc homeostasis at low concentrations of zinc. The sequence is that of Zinc transporter ZitB from Salmonella typhimurium (strain LT2 / SGSC1412 / ATCC 700720).